The following is a 221-amino-acid chain: Glutathione S-transferase U25 (221 aa).

At Ala2 the chain carries N-acetylalanine. The GST N-terminal domain maps to 3 to 82 (DEVILLDFWP…YIDEVWPSKT (80 aa)). Residues 13 to 14 (SM), 39 to 40 (NK), 53 to 54 (KI), and 66 to 67 (ES) contribute to the glutathione site. A GST C-terminal domain is found at 88–208 (DPYQRAQAKF…LPDSEKIIKF (121 aa)). At Thr149 the chain carries Phosphothreonine.

This sequence belongs to the GST superfamily. Tau family.

The protein localises to the cytoplasm. The protein resides in the cytosol. The enzyme catalyses RX + glutathione = an S-substituted glutathione + a halide anion + H(+). May be involved in the conjugation of reduced glutathione to a wide number of exogenous and endogenous hydrophobic electrophiles and have a detoxification role against certain herbicides. The chain is Glutathione S-transferase U25 (GSTU25) from Arabidopsis thaliana (Mouse-ear cress).